The primary structure comprises 189 residues: Probable nicotinate-nucleotide adenylyltransferase (189 aa).

Belongs to the NadD family.

The enzyme catalyses nicotinate beta-D-ribonucleotide + ATP + H(+) = deamido-NAD(+) + diphosphate. The protein operates within cofactor biosynthesis; NAD(+) biosynthesis; deamido-NAD(+) from nicotinate D-ribonucleotide: step 1/1. Its function is as follows. Catalyzes the reversible adenylation of nicotinate mononucleotide (NaMN) to nicotinic acid adenine dinucleotide (NaAD). The polypeptide is Probable nicotinate-nucleotide adenylyltransferase (Bacillus licheniformis (strain ATCC 14580 / DSM 13 / JCM 2505 / CCUG 7422 / NBRC 12200 / NCIMB 9375 / NCTC 10341 / NRRL NRS-1264 / Gibson 46)).